The chain runs to 137 residues: Allergen Ste b 1 (137 aa).

A signal peptide spans 1 to 18 (ALFAAAGLAAAAPFETRQ). In terms of domain architecture, AA1-like spans 28 to 137 (QGDYVWKISE…PKDVICQGAS (110 aa)). Cystine bridges form between C67–C82 and C121–C133.

The protein belongs to the ALTA1 family. In terms of assembly, homodimer; disulfide-linked.

It localises to the secreted. This is Allergen Ste b 1 (alta1) from Stemphylium botryosum (Black stalk rot fungus).